We begin with the raw amino-acid sequence, 323 residues long: Phosphate acetyltransferase (323 aa).

The protein belongs to the phosphate acetyltransferase and butyryltransferase family.

The protein localises to the cytoplasm. The catalysed reaction is acetyl-CoA + phosphate = acetyl phosphate + CoA. Its pathway is metabolic intermediate biosynthesis; acetyl-CoA biosynthesis; acetyl-CoA from acetate: step 2/2. This Bacillus subtilis (strain 168) protein is Phosphate acetyltransferase (pta).